A 190-amino-acid polypeptide reads, in one-letter code: MRGLRPALSTFLFLLLITGGVYPLLTTALGQWWFPWQANGSLIREGDTVRGSALIGQNFTGNGYFHGRPSATAEMPYNPQASGGSNLAVSNPELDKQIAARVAALRAANPDASTNVPVELVTASASGLDNNITPQAAAWQIPRVAKARNLSVEQLTQLIAKYSQQPLVKYIGQPVVNIVELNLALDRLDE.

A helical transmembrane segment spans residues 10-30; the sequence is TFLFLLLITGGVYPLLTTALG.

This sequence belongs to the KdpC family. In terms of assembly, the system is composed of three essential subunits: KdpA, KdpB and KdpC.

The protein localises to the cell inner membrane. Functionally, part of the high-affinity ATP-driven potassium transport (or Kdp) system, which catalyzes the hydrolysis of ATP coupled with the electrogenic transport of potassium into the cytoplasm. This subunit acts as a catalytic chaperone that increases the ATP-binding affinity of the ATP-hydrolyzing subunit KdpB by the formation of a transient KdpB/KdpC/ATP ternary complex. This chain is Potassium-transporting ATPase KdpC subunit, found in Escherichia coli O45:K1 (strain S88 / ExPEC).